A 134-amino-acid chain; its full sequence is ATP synthase epsilon chain (134 aa).

Belongs to the ATPase epsilon chain family. F-type ATPases have 2 components, CF(1) - the catalytic core - and CF(0) - the membrane proton channel. CF(1) has five subunits: alpha(3), beta(3), gamma(1), delta(1), epsilon(1). CF(0) has three main subunits: a, b and c.

Its subcellular location is the cell membrane. Its function is as follows. Produces ATP from ADP in the presence of a proton gradient across the membrane. This chain is ATP synthase epsilon chain, found in Staphylococcus saprophyticus subsp. saprophyticus (strain ATCC 15305 / DSM 20229 / NCIMB 8711 / NCTC 7292 / S-41).